Reading from the N-terminus, the 1582-residue chain is Sca1 complex scaffold protein scaA (1582 aa).

2 stretches are compositionally biased toward low complexity: residues 1–14 and 109–131; these read MSSL…TPST and LSPS…TTST. Disordered regions lie at residues 1-22 and 108-147; these read MSSL…TFSK and GLSP…QIKK. Residues 4 to 37 form a TPR 1 repeat; that stretch reads LDPSLSTTPSTNRRGTFSKAKSFRRAALNLEPQG. One copy of the TPR 2 repeat lies at 166 to 199; it reads IYTSFPESMAFDDYMDYEESLVEWKRQVEQNLGI. Residues 246–349 are disordered; it reads IKETNSSVND…PSTGSLAGFV (104 aa). 3 stretches are compositionally biased toward polar residues: residues 249 to 267, 288 to 310, and 318 to 332; these read TNSS…PTLR, NKDN…NSGI, and SDTS…QLDG. Ser-359 is subject to Phosphoserine; by PKB. The segment at 400-600 is gefA and gefH binding; it reads RSGSGFGMDH…QRQTSTWFRG (201 aa). 2 disordered regions span residues 468 to 493 and 686 to 734; these read PKNS…GVGG and SLSS…DKDK. Gly residues-rich tracts occupy residues 478-493 and 694-714; these read GSGG…GVGG and QQQG…GSGS. Low complexity predominate over residues 715–726; it reads GLNMSGTSGSSG. Residues 742–777 form a TPR 3 repeat; the sequence is MHSINNTTNVGTKEDRRQYTKILQTYEQRLQFSFRL. Residues 864 to 875 show a composition bias toward gly residues; that stretch reads GGGSGGASGGGI. The disordered stretch occupies residues 864–978; sequence GGGSGGASGG…GSISTHPNTP (115 aa). The span at 903–928 shows a compositional bias: low complexity; the sequence is HIPSGSSLLSSPPNRQGSTGSFSFIG. The segment covering 940–953 has biased composition (polar residues); it reads NSSSLESPRTQSQL. Positions 960-972 are enriched in low complexity; sequence GSSPRSHSGGSIS. Residues 1000-1400 are pppA and pho2B binding; that stretch reads FLDLTNEKLA…SIKKEGNLYN (401 aa). Residues 1080–1113 form a TPR 4 repeat; it reads TQEVVRLVFVYYYLGIIQERLNFFSNNVGILGFV.

As to quaternary structure, component of the Sca1 complex composed of at least gefA, gefH, scaA, phr, and the protein phosphatase 2A subunits pppA and pho2B. Post-translationally, phosphorylated at Ser-359 by PKB and PKBR1 is induced by chemoattractant.

The protein localises to the cell membrane. Functionally, component of the Sca1 complex, a regulator of cell motility, chemotaxis and signal relay. The Sca1 complex is recruited to the plasma membrane in a chemoattractant- and F-actin-dependent manner and is enriched at the leading edge of chemotaxing cells where it regulates F-actin dynamics and signal relay by controlling the activation of rasC and the downstream target of rapamycin complex 2 (TORC2)-Akt/protein kinase B (PKB) pathway. ScaA acts as a molecular scaffold, bringing together gefA, gefH and phr with PP2A. The chain is Sca1 complex scaffold protein scaA from Dictyostelium discoideum (Social amoeba).